Here is a 417-residue protein sequence, read N- to C-terminus: Queuine tRNA-ribosyltransferase accessory subunit 2 (417 aa).

Zn(2+) is bound by residues C324, C326, C329, and H355.

It belongs to the queuine tRNA-ribosyltransferase family. QTRT2 subfamily. As to quaternary structure, heterodimer of a catalytic subunit and an accessory subunit. It depends on Zn(2+) as a cofactor.

It localises to the cytoplasm. Functionally, non-catalytic subunit of the queuine tRNA-ribosyltransferase (TGT) that catalyzes the base-exchange of a guanine (G) residue with queuine (Q) at position 34 (anticodon wobble position) in tRNAs with GU(N) anticodons (tRNA-Asp, -Asn, -His and -Tyr), resulting in the hypermodified nucleoside queuosine (7-(((4,5-cis-dihydroxy-2-cyclopenten-1-yl)amino)methyl)-7-deazaguanosine). This Drosophila persimilis (Fruit fly) protein is Queuine tRNA-ribosyltransferase accessory subunit 2.